Here is a 1372-residue protein sequence, read N- to C-terminus: DNA-directed RNA polymerase subunit beta' (1372 aa).

Residues Cys69, Cys71, Cys84, and Cys87 each coordinate Zn(2+). Mg(2+) is bound by residues Asp460, Asp462, and Asp464. Zn(2+) contacts are provided by Cys808, Cys882, Cys889, and Cys892.

Belongs to the RNA polymerase beta' chain family. The RNAP catalytic core consists of 2 alpha, 1 beta, 1 beta' and 1 omega subunit. When a sigma factor is associated with the core the holoenzyme is formed, which can initiate transcription. Mg(2+) serves as cofactor. Zn(2+) is required as a cofactor.

The catalysed reaction is RNA(n) + a ribonucleoside 5'-triphosphate = RNA(n+1) + diphosphate. In terms of biological role, DNA-dependent RNA polymerase catalyzes the transcription of DNA into RNA using the four ribonucleoside triphosphates as substrates. In Rickettsia conorii (strain ATCC VR-613 / Malish 7), this protein is DNA-directed RNA polymerase subunit beta'.